We begin with the raw amino-acid sequence, 566 residues long: MGAKSKSSSTRFFMFYLILISLSFLGLLLNFKPLFLLNPMIASPSIVEIRYSLPEPVKRTPIWLRLIRNYLPDEKKIRVGLLNIAENERESYEASGTSILENVHVSLDPLPNNLTWTSLFPVWIDEDHTWHIPSCPEVPLPKMEGSEADVDVVVVKVPCDGFSEKRGLRDVFRLQVNLAAANLVVESGRRNVDRTVYVVFIGSCGPMHEIFRCDERVKRVGDYWVYRPDLTRLKQKLLMPPGSCQIAPLGQGEAWIQDKNRNLTSEKTTLSSFTAQRVAYVTLLHSSEVYVCGAIALAQSIRQSGSTKDMILLHDDSITNISLIGLSLAGWKLRRVERIRSPFSKKRSYNEWNYSKLRVWQVTDYDKLVFIDADFIIVKNIDYLFSYPQLSAAGNNKVLFNSGVMVLEPSACLFEDLMLKSFKIGSYNGGDQGFLNEYFVWWHRLSKRLNTMKYFGDESRHDKARNLPENLEGIHYLGLKPWRCYRDYDCNWDLKTRRVYASESVHARWWKVYDKMPKKLKGYCGLNLKMEKNVEKWRKMAKLNGFPENHWKIRIKDPRKKNRLSQ.

A helical; Signal-anchor for type II membrane protein membrane pass occupies residues 17–37 (LILISLSFLGLLLNFKPLFLL). Residues aspartate 372 and aspartate 374 each contribute to the Mn(2+) site. Substrate is bound by residues 372–374 (DAD), 401–403 (NSG), 428–432 (NGGDQ), and 475–480 (HYLGLK). Histidine 475 is a binding site for Mn(2+).

It belongs to the glycosyltransferase 8 family. Glycogenin subfamily. It depends on Mn(2+) as a cofactor.

It localises to the golgi apparatus membrane. May be involved in the substitutions of the xylan backbone in stem glucuronoxylan. This Arabidopsis thaliana (Mouse-ear cress) protein is Putative UDP-glucuronate:xylan alpha-glucuronosyltransferase 5 (GUX5).